A 162-amino-acid polypeptide reads, in one-letter code: uncharacterized protein (162 aa).

The N-terminal stretch at 1-21 (MRLCGLLIFLSYIVYVDNAVT) is a signal peptide.

This is an uncharacterized protein from Caenorhabditis elegans.